We begin with the raw amino-acid sequence, 163 residues long: MPSFDIVSEVDLQEARNAVDNASREVESRFDFRGVEATFELNDANKTIKVLSESDFQVNQLLDILRAKLLKRGIEGTSLDVPEDIVHSGKTWFVEAKLKQGIESAVQKKIVKMIKDSKLKVQAQIQGEEIRVTGKSRDDLQSVMALVRGGDLGQPFQFKNFRD.

Belongs to the YajQ family.

Nucleotide-binding protein. The sequence is that of Nucleotide-binding protein KPN78578_03700 from Klebsiella pneumoniae subsp. pneumoniae (strain ATCC 700721 / MGH 78578).